The chain runs to 873 residues: Kinase suppressor of Ras 1 (873 aa).

3 disordered regions span residues 1–24 (MDRA…GAAA), 174–230 (EHKM…PGLS), and 251–281 (LHSF…PSRK). The interval 1 to 170 (MDRAALRAAA…ALTCLRKVTG (170 aa)) is mediates association with membranes. Residues 206 to 216 (ASTQGPRSISV) show a composition bias toward polar residues. Phosphothreonine is present on residues Thr256 and Thr260. Ser297 is subject to Phosphoserine; by MARK3. The residue at position 320 (Ser320) is a Phosphoserine. Residues 333-377 (THRFSTKSWLSQVCNVCQKSMIFGVKCKHCRLKCHNKCTKEAPAC) form a Phorbol-ester/DAG-type zinc finger. His334 provides a ligand contact to Zn(2+). Ser337 bears the Phosphoserine mark. Residues Cys346, Cys349, Cys359, Cys362, His367, Cys370, and Cys377 each coordinate Zn(2+). Phosphoserine; by MARK3 is present on Ser392. Thr411 bears the Phosphothreonine mark. Disordered stretches follow at residues 416 to 473 (LTKK…RFSF) and 506 to 544 (HEAE…PISR). Residues 429-458 (SSSNPSSTTSSTPSSPAPFLTSSNPSSATT) are compositionally biased toward low complexity. Basic and acidic residues predominate over residues 506-519 (HEAEAEEPEAGKSE). The residue at position 518 (Ser518) is a Phosphoserine. Over residues 520–530 (AEDDEEDEVDD) the composition is skewed to acidic residues. Residues 563–833 (VELGEPIGQG…MDMLERLPKL (271 aa)) enclose the Protein kinase domain. 569 to 577 (IGQGRWGRV) lines the ATP pocket. Catalysis depends on Asp683, which acts as the Proton acceptor. Residues Lys685 and Asp700 each contribute to the ATP site. Ser838 bears the Phosphoserine mark.

This sequence belongs to the protein kinase superfamily. TKL Ser/Thr protein kinase family. In terms of assembly, homodimer. Heterodimerizes (via N-terminus) with BRAF (via N-terminus) in a MAP2K1/MEK1 or MAP2K2/MEK2-dependent manner. Interacts with MAP2K1/MEK1 and MAP2K2/MEK2. Binding to MAP2K1/MEK1 releases the intramolecular inhibitory interaction between KSR1 N-terminus and kinase domains which is required for the subsequent RSK1 dimerization with BRAF. Identified in a complex with AKAP13, MAP2K1 and BRAF. Interacts with AKAP13 and BRAF. Interacts with RAF and MAPK/ERK, in a Ras-dependent manner. Interacts with 14-3-3 proteins including YWHAB. Interacts with HSP90AA1/HSP90, YWHAE/14-3-3 and CDC37. The binding of 14-3-3 proteins to phosphorylated KSR1 prevents the membrane localization. Interacts with MARK3/C-TAK1. Interacts with PPP2R1A and PPP2CA. Interacts with VRK2. Phosphorylated on Ser-297 and, to a higher extent, on Ser-392 by MARK3. Dephosphorylated on Ser-392 by PPP2CA. Phosphorylated KSR1 is cytoplasmic and dephosphorylated KSR1 is membrane-associated. Phosphorylated by PKA at Ser-838. Phosphorylation at Ser-838 is required for cAMP-dependent activation of MAPK1 and/or MAPK3. Expressed in brain, spleen and testis. Isoform 1 is highly expressed spleen and weakly in testis, and isoform 2 is highly expressed in brain and weakly in testis.

It localises to the cytoplasm. Its subcellular location is the membrane. The protein resides in the cell membrane. It is found in the cell projection. The protein localises to the ruffle membrane. It localises to the endoplasmic reticulum membrane. It carries out the reaction L-seryl-[protein] + ATP = O-phospho-L-seryl-[protein] + ADP + H(+). It catalyses the reaction L-threonyl-[protein] + ATP = O-phospho-L-threonyl-[protein] + ADP + H(+). Its function is as follows. Part of a multiprotein signaling complex which promotes phosphorylation of Raf family members and activation of downstream MAP kinases. Independently of its kinase activity, acts as MAP2K1/MEK1 and MAP2K2/MEK2-dependent allosteric activator of BRAF; upon binding to MAP2K1/MEK1 or MAP2K2/MEK2, dimerizes with BRAF and promotes BRAF-mediated phosphorylation of MAP2K1/MEK1 and/or MAP2K2/MEK2. Promotes activation of MAPK1 and/or MAPK3, both in response to EGF and to cAMP. Its kinase activity is unsure. Some protein kinase activity has been detected in vitro, however the physiological relevance of this activity is unknown. The chain is Kinase suppressor of Ras 1 (Ksr1) from Mus musculus (Mouse).